The following is a 155-amino-acid chain: Protein-export protein SecB (155 aa).

Belongs to the SecB family. Homotetramer, a dimer of dimers. One homotetramer interacts with 1 SecA dimer.

It is found in the cytoplasm. Functionally, one of the proteins required for the normal export of preproteins out of the cell cytoplasm. It is a molecular chaperone that binds to a subset of precursor proteins, maintaining them in a translocation-competent state. It also specifically binds to its receptor SecA. This chain is Protein-export protein SecB, found in Escherichia coli O127:H6 (strain E2348/69 / EPEC).